The sequence spans 258 residues: Snake venom serine protease 1 (258 aa).

An N-terminal signal peptide occupies residues 1 to 18 (MVLIRVLANLLILQLSYA). Residues 19–24 (QKSSEL) constitute a propeptide that is removed on maturation. Residues 25 to 249 (VVGGDECNIN…YNDWIKSIIA (225 aa)) enclose the Peptidase S1 domain. 6 disulfide bridges follow: cysteine 31-cysteine 163, cysteine 50-cysteine 66, cysteine 98-cysteine 256, cysteine 142-cysteine 210, cysteine 174-cysteine 189, and cysteine 200-cysteine 225. N-linked (GlcNAc...) asparagine glycosylation is present at asparagine 44. Active-site charge relay system residues include histidine 65 and aspartate 110. The Charge relay system role is filled by serine 204.

The protein belongs to the peptidase S1 family. Snake venom subfamily. As to quaternary structure, monomer. As to expression, expressed by the venom gland.

It localises to the secreted. Snake venom serine protease that may act in the hemostasis system of the prey. In Craspedocephalus gramineus (Bamboo pit viper), this protein is Snake venom serine protease 1 (TLG1).